The primary structure comprises 80 residues: Omega-conotoxin-like PuIA (80 aa).

The first 22 residues, 1–22 (MKLTCVMIVAVLFLTAWTFVTA), serve as a signal peptide directing secretion. The propeptide occupies 23 to 50 (DSIRALEDLFAKAPDEMENSGASPLNER). 3 cysteine pairs are disulfide-bonded: cysteine 52-cysteine 70, cysteine 59-cysteine 74, and cysteine 69-cysteine 78.

Belongs to the conotoxin O1 superfamily. Expressed by the venom duct.

The protein localises to the secreted. In terms of biological role, omega-conotoxins act at presynaptic membranes, they bind and block voltage-gated calcium channels (Cav). The sequence is that of Omega-conotoxin-like PuIA from Conus pulicarius (Flea-bitten cone).